Consider the following 157-residue polypeptide: Serine-protein kinase RsbW (157 aa).

The protein belongs to the anti-sigma-factor family.

It catalyses the reaction L-seryl-[protein] + ATP = O-phospho-L-seryl-[protein] + ADP + H(+). The catalysed reaction is L-threonyl-[protein] + ATP = O-phospho-L-threonyl-[protein] + ADP + H(+). Functionally, negative regulator of sigma-B activity. Phosphorylates and inactivates its specific antagonist protein, RsbV. Upon phosphorylation of RsbV, RsbW is released and binds to sigma-B, thereby blocking its ability to form an RNA polymerase holoenzyme (E-sigma-B). In Listeria monocytogenes serotype 4b (strain CLIP80459), this protein is Serine-protein kinase RsbW.